Consider the following 292-residue polypeptide: Aquaporin-3 (292 aa).

Over 1-24 (MGRQKELMNRCGEMLHIRYRLLRQ) the chain is Cytoplasmic. A helical membrane pass occupies residues 25-42 (ALAECLGTLILVMFGCGS). Over 43–56 (VAQVVLSRGTHGGF) the chain is Extracellular. Residues 57-74 (LTINLAFGFAVTLGILVA) traverse the membrane as a helical segment. At 75–78 (GQVS) the chain is on the cytoplasmic side. Residues 79–92 (GAHLNPAVTFAMCF) constitute an intramembrane region (discontinuously helical). Positions 83 to 85 (NPA) match the NPA 1 motif. At 93–100 (LAREPWIK) the chain is on the cytoplasmic side. The helical transmembrane segment at 101–121 (LPIYALAQTLGAFLGAGIVFG) threads the bilayer. Residues 122–159 (LYYDAIWAFANNELFVSGPNGTAGIFATYPSGHLDMVN) are Extracellular-facing. An N-linked (GlcNAc...) asparagine glycan is attached at Asn-141. The helical transmembrane segment at 160–177 (GFFDQFIGTAALIVCVLA) threads the bilayer. Topologically, residues 178-189 (IVDPYNNPVPRG) are cytoplasmic. The helical transmembrane segment at 190-206 (LEAFTVGLVVLVIGTSM) threads the bilayer. At 207 to 210 (GFNS) the chain is on the extracellular side. Positions 211–224 (GYAVNPARDFGPRL) form an intramembrane region, discontinuously helical. An NPA 2 motif is present at residues 215 to 217 (NPA). The Extracellular portion of the chain corresponds to 225-242 (FTALAGWGSEVFTTGRHW). The helical transmembrane segment at 243 to 264 (WWVPIVSPLLGSIAGVFVYQLM) threads the bilayer. The Cytoplasmic portion of the chain corresponds to 265 to 292 (IGCHLEQPPPSTEEENVKLAHMKHKEQI).

It belongs to the MIP/aquaporin (TC 1.A.8) family. As to quaternary structure, homotetramer; each monomer provides an independent glycerol/water pore. Could also exist in other oligomeric states. In terms of tissue distribution, detected in principal cells in collecting ducts in kidney medulla (at protein level). Renal medulla and colon. Predominantly in the inner medulla. Expressed in basal layer of epidermal keratinocytes.

Its subcellular location is the cell membrane. The protein localises to the basolateral cell membrane. The enzyme catalyses glycerol(in) = glycerol(out). It carries out the reaction H2O(in) = H2O(out). It catalyses the reaction urea(in) = urea(out). The catalysed reaction is H2O2(out) = H2O2(in). Its function is as follows. Aquaglyceroporins form homotetrameric transmembrane channels, with each monomer independently mediating glycerol and water transport across the plasma membrane along their osmotic gradient. Could also be permeable to urea. Also participates in cell permeability to H2O2 and H2O2-mediated signaling. In skin, transports glycerol to the epidermis and stratum corneum, where it maintains hydration, elasticity, and supports lipid biosynthesis for barrier repair. In kidney, contributes to the reabsorption of water, helping the body maintain proper fluid balance. This Mus musculus (Mouse) protein is Aquaporin-3.